A 528-amino-acid chain; its full sequence is Calcium-dependent protein kinase 4 (528 aa).

Positions 1-16 (MGQEMSTQSDMQNENQ) are enriched in polar residues. The tract at residues 1-36 (MGQEMSTQSDMQNENQKGNKRNLKGSQGKNGLKERS) is disordered. Gly2 carries the N-myristoyl glycine lipid modification. Positions 70 to 328 (YKGIKILGKG…ARDALEHEWI (259 aa)) constitute a Protein kinase domain. ATP contacts are provided by residues 76–84 (LGKGSFGEV) and Lys99. Catalysis depends on Asp193, which acts as the Proton acceptor. Positions 350–358 (NIKQFQSTQ) match the J domain autoinhibitory motif motif. Positions 350 to 386 (NIKQFQSTQKLAQAALLYMGSKLTTIDETKELTKIFK) are j domain. Positions 359-368 (KLAQAALLYM) match the J domain EF-hand interaction motif motif. EF-hand domains lie at 376–411 (DETK…LLKL), 423–458 (AIEV…RKLL), 459–494 (LSTE…GDVS), and 498–528 (WKTV…LCNY). Ca(2+)-binding residues include Asp389, Asn391, Asp393, Gln395, Glu400, Asp436, Asp438, Asn440, Tyr442, Glu447, Asp472, Asp474, Ser476, Lys478, Glu483, Asp506, Asn508, Asp510, Glu512, and Glu517.

This sequence belongs to the protein kinase superfamily. Ser/Thr protein kinase family. CDPK subfamily. As to quaternary structure, may interact with the pre-replication MCM complex prior male gametogenesis activation. Requires Mg(2+) as cofactor. In terms of processing, myristoylated; myristoylation may target it to different subcellular compartments. During male gametogenesis, myristoylation is required to initiate DNA replication but not for mitotic spindle assembly or axoneme activation. Not palmitoylated. Post-translationally, may be autophosphorylated on Thr-234 in vitro.

It is found in the cytoplasm. The protein localises to the membrane. The protein resides in the chromosome. It carries out the reaction L-seryl-[protein] + ATP = O-phospho-L-seryl-[protein] + ADP + H(+). The enzyme catalyses L-threonyl-[protein] + ATP = O-phospho-L-threonyl-[protein] + ADP + H(+). Its activity is regulated as follows. Activated by calcium. Upon calcium binding to the EF-hand domains, the C-terminus of the junction domain (J domain) undergoes a conformational change which results in the dissociation of the pseudo-substrate inhibitory motif from the catalytic domain. This, in turn, may facilitate the autophosphorylation of the activation loop at Thr-234, which leads to the kinase activation. Intracellular calcium increase is triggered by xanthurenic acid (XA), a small mosquito molecule that induces the differentiation of specialized transmission stages, the gametocytes, into male and female gametes. Activated by a decrease in temperature (20 degrees Celsius) and an increase in pH (7.6) occurring when the parasite is ingested by in the mosquito. Its function is as follows. Calcium-dependent protein kinase which acts as a sensor and effector of intracellular Ca(2+) levels probably in part downstream of cGMP-activated PKG kinase. Plays a central role in the host erythrocytes and hepatocytes infection cycles, sexual reproduction and mosquito transmission of the parasite. During the liver stage, involved in sporozoite motility and thus in sporozoite invasion of host hepatocytes, probably together with CDPK1 and CDPK5. Involved in merosome egress from host hepatocytes, probably together with CDPK5. During the asexual blood stage, involved in merozoite invasion of host erythrocytes and motility by stabilizing the inner membrane complex, a structure below the plasma membrane which acts as an anchor for the glidosome, an acto-myosin motor. Required for cell cycle progression in the male gametocyte. During male gametogenesis in the mosquito gut, required to initiate the first round of DNA replication, probably by facilitating the assembly of the pre-replicative MCM complex, to assemble the first mitotic spindle and, at the end of gametogenesis, to initiate axoneme motility, cytokinesis and subsequent exflagellation. For each of these steps, may phosphorylate SOC1, SOC2 and SOC3, respectively. Together with CDPK1, regulates ookinete gliding in the mosquito host midgut. During male gametogenesis in the mosquito gut, required to initiate the first round of DNA replication, probably by facilitating the assembly of the pre-replicative MCM complex, and to assemble the first mitotic spindle. In terms of biological role, at the end of male gametogenesis in the mosquito gut, required to initiate axoneme motility, cytokinesis and subsequent exflagellation. The polypeptide is Calcium-dependent protein kinase 4 (Plasmodium berghei (strain Anka)).